The following is a 414-amino-acid chain: Tyrosine--tRNA ligase (414 aa).

The short motif at 57–66 (PSAPDVHIGH) is the 'HIGH' region element. The 'KMSKS' region signature appears at 241–245 (KMSKS). Lys-244 lines the ATP pocket. The region spanning 352-413 (VPLIDLLVTL…GKRKFAKLSL (62 aa)) is the S4 RNA-binding domain.

Belongs to the class-I aminoacyl-tRNA synthetase family. TyrS type 2 subfamily. As to quaternary structure, homodimer.

The protein localises to the cytoplasm. It catalyses the reaction tRNA(Tyr) + L-tyrosine + ATP = L-tyrosyl-tRNA(Tyr) + AMP + diphosphate + H(+). Catalyzes the attachment of tyrosine to tRNA(Tyr) in a two-step reaction: tyrosine is first activated by ATP to form Tyr-AMP and then transferred to the acceptor end of tRNA(Tyr). The chain is Tyrosine--tRNA ligase from Shouchella clausii (strain KSM-K16) (Alkalihalobacillus clausii).